A 235-amino-acid polypeptide reads, in one-letter code: Leucyl/phenylalanyl-tRNA--protein transferase (235 aa).

Belongs to the L/F-transferase family.

The protein localises to the cytoplasm. The enzyme catalyses N-terminal L-lysyl-[protein] + L-leucyl-tRNA(Leu) = N-terminal L-leucyl-L-lysyl-[protein] + tRNA(Leu) + H(+). It carries out the reaction N-terminal L-arginyl-[protein] + L-leucyl-tRNA(Leu) = N-terminal L-leucyl-L-arginyl-[protein] + tRNA(Leu) + H(+). The catalysed reaction is L-phenylalanyl-tRNA(Phe) + an N-terminal L-alpha-aminoacyl-[protein] = an N-terminal L-phenylalanyl-L-alpha-aminoacyl-[protein] + tRNA(Phe). Functionally, functions in the N-end rule pathway of protein degradation where it conjugates Leu, Phe and, less efficiently, Met from aminoacyl-tRNAs to the N-termini of proteins containing an N-terminal arginine or lysine. The protein is Leucyl/phenylalanyl-tRNA--protein transferase of Magnetococcus marinus (strain ATCC BAA-1437 / JCM 17883 / MC-1).